A 192-amino-acid polypeptide reads, in one-letter code: Ion-translocating oxidoreductase complex subunit B (192 aa).

Residues 1 to 26 (MNAIWIAVAAVSLLALAFGAILGYAS) form a hydrophobic region. One can recognise a 4Fe-4S domain in the interval 32 to 91 (EDDPVVEKIDEILPQSQCGQCGYPGCRPYAEAISCNGEKINRCAPGGEAVMLKIAELLNV). Cysteine 49, cysteine 52, cysteine 57, cysteine 74, cysteine 117, cysteine 120, cysteine 123, cysteine 127, cysteine 147, cysteine 150, cysteine 153, and cysteine 157 together coordinate [4Fe-4S] cluster. 4Fe-4S ferredoxin-type domains follow at residues 108 to 137 (MVAV…GATR) and 138 to 167 (AMHT…LQPV).

Belongs to the 4Fe4S bacterial-type ferredoxin family. RnfB subfamily. In terms of assembly, the complex is composed of six subunits: RsxA, RsxB, RsxC, RsxD, RsxE and RsxG. It depends on [4Fe-4S] cluster as a cofactor.

The protein resides in the cell inner membrane. Part of a membrane-bound complex that couples electron transfer with translocation of ions across the membrane. Required to maintain the reduced state of SoxR. The sequence is that of Ion-translocating oxidoreductase complex subunit B from Escherichia coli O81 (strain ED1a).